The chain runs to 484 residues: Aspartyl/glutamyl-tRNA(Asn/Gln) amidotransferase subunit B (484 aa).

Belongs to the GatB/GatE family. GatB subfamily. In terms of assembly, heterotrimer of A, B and C subunits.

The catalysed reaction is L-glutamyl-tRNA(Gln) + L-glutamine + ATP + H2O = L-glutaminyl-tRNA(Gln) + L-glutamate + ADP + phosphate + H(+). It carries out the reaction L-aspartyl-tRNA(Asn) + L-glutamine + ATP + H2O = L-asparaginyl-tRNA(Asn) + L-glutamate + ADP + phosphate + 2 H(+). Allows the formation of correctly charged Asn-tRNA(Asn) or Gln-tRNA(Gln) through the transamidation of misacylated Asp-tRNA(Asn) or Glu-tRNA(Gln) in organisms which lack either or both of asparaginyl-tRNA or glutaminyl-tRNA synthetases. The reaction takes place in the presence of glutamine and ATP through an activated phospho-Asp-tRNA(Asn) or phospho-Glu-tRNA(Gln). The polypeptide is Aspartyl/glutamyl-tRNA(Asn/Gln) amidotransferase subunit B (Anaeromyxobacter sp. (strain K)).